The primary structure comprises 637 residues: Early transcription factor 70 kDa subunit (637 aa).

The Helicase ATP-binding domain occupies 32-185 (RTIIDENRSV…GHIIDLMSEE (154 aa)). 45-52 (HIMGSGKT) provides a ligand contact to ATP. The DEXH box motif lies at 135 to 138 (DEAH). In terms of domain architecture, Helicase C-terminal spans 327–507 (KFKYFINRIQ…VLPFDIKKLL (181 aa)).

This sequence belongs to the helicase family. VETF subfamily. In terms of assembly, heterodimer of a 70 kDa and a 82 kDa subunit. Part of the early transcription complex composed of ETF, RAP94/OPG109, and the DNA-directed RNA polymerase.

It localises to the virion. Acts with RNA polymerase to initiate transcription from early gene promoters. Is recruited by the RPO-associated protein of 94 kDa RAP94/OPG109 to form the early transcription complex, which also contains the core RNA polymerase. ETF heterodimer binds to early gene promoters. This chain is Early transcription factor 70 kDa subunit (OPG118), found in Vaccinia virus (strain Ankara) (VACV).